The following is a 218-amino-acid chain: Octanoyltransferase (218 aa).

Positions 32 to 211 (INTYDEIWFL…KLSQLLNVSI (180 aa)) constitute a BPL/LPL catalytic domain. Substrate contacts are provided by residues 75-82 (RGGQITYH), 142-144 (SLG), and 155-157 (GLS). The Acyl-thioester intermediate role is filled by Cys-173.

It belongs to the LipB family.

It localises to the cytoplasm. The catalysed reaction is octanoyl-[ACP] + L-lysyl-[protein] = N(6)-octanoyl-L-lysyl-[protein] + holo-[ACP] + H(+). It functions in the pathway protein modification; protein lipoylation via endogenous pathway; protein N(6)-(lipoyl)lysine from octanoyl-[acyl-carrier-protein]: step 1/2. Catalyzes the transfer of endogenously produced octanoic acid from octanoyl-acyl-carrier-protein onto the lipoyl domains of lipoate-dependent enzymes. Lipoyl-ACP can also act as a substrate although octanoyl-ACP is likely to be the physiological substrate. In Buchnera aphidicola subsp. Schizaphis graminum (strain Sg), this protein is Octanoyltransferase.